Here is a 156-residue protein sequence, read N- to C-terminus: Endogenous retrovirus group K member 10 Pro protein (156 aa).

Residues 21–96 (FEGLVDTGAD…IPLNLWGRDL (76 aa)) form the Peptidase A2 domain. Aspartate 26 is an active-site residue. The G-patch domain occupies 111 to 156 (YSPTSQKIMTKMGYIPGKGLGKNEDGIKVPVEAKINQEREGIGYPF).

This sequence belongs to the peptidase A2 family. HERV class-II K(HML-2) subfamily. In terms of assembly, active as a homodimer. In terms of processing, autoproteolytically processed at the N-terminus. Expected C-terminal autoprocessing not detected. The sequence shown is that of the processed Pro protein.

The enzyme catalyses Processing at the authentic HIV-1 PR recognition site and release of the mature p17 matrix and the p24 capsid protein, as a result of the cleavage of the -SQNY-|-PIVQ- cleavage site.. Its activity is regulated as follows. Resistant to a number of clinically useful HIV-1 PR inhibitors. Inhibited by cyclic urea SD146. Functionally, retroviral proteases have roles in processing of the primary translation products and the maturation of the viral particle. Endogenous Pro proteins may have kept, lost or modified their original function during evolution. This endogenous protein has retained most of the characteristics of retroviral proteases. The sequence is that of Endogenous retrovirus group K member 10 Pro protein (ERVK-10) from Homo sapiens (Human).